A 257-amino-acid chain; its full sequence is Staphylococcal secretory antigen SsaA (257 aa).

The signal sequence occupies residues methionine 1–alanine 26. 8 tandem repeats follow at residues tyrosine 73 to asparagine 75, tyrosine 76 to asparagine 78, tyrosine 84 to asparagine 86, tyrosine 87 to asparagine 89, tyrosine 90 to asparagine 92, tyrosine 93 to asparagine 95, tyrosine 96 to asparagine 98, and tyrosine 99 to asparagine 101. The interval tyrosine 73–asparagine 101 is 8 X 3 AA repeats of Y-[NS]-N. Residues asparagine 101–serine 144 form a disordered region. The segment covering threonine 107–threonine 116 has biased composition (polar residues). Over residues serine 122–serine 136 the composition is skewed to low complexity. A Peptidase C51 domain is found at serine 136–histidine 257.

The protein localises to the secreted. Functionally, not known; immunogenic protein expressed during sepsis and particularly during episodes of infective endocarditis. The sequence is that of Staphylococcal secretory antigen SsaA (ssaA) from Staphylococcus epidermidis.